Consider the following 180-residue polypeptide: Large ribosomal subunit protein uL5 (180 aa).

It belongs to the universal ribosomal protein uL5 family. Part of the 50S ribosomal subunit; part of the 5S rRNA/L5/L18/L25 subcomplex. Contacts the 5S rRNA and the P site tRNA. Forms a bridge to the 30S subunit in the 70S ribosome.

In terms of biological role, this is one of the proteins that bind and probably mediate the attachment of the 5S RNA into the large ribosomal subunit, where it forms part of the central protuberance. In the 70S ribosome it contacts protein S13 of the 30S subunit (bridge B1b), connecting the 2 subunits; this bridge is implicated in subunit movement. Contacts the P site tRNA; the 5S rRNA and some of its associated proteins might help stabilize positioning of ribosome-bound tRNAs. This is Large ribosomal subunit protein uL5 from Streptococcus pyogenes serotype M1.